Consider the following 66-residue polypeptide: Large ribosomal subunit protein bL35 (66 aa).

Composition is skewed to basic residues over residues 1–15 (MPKL…KRFK) and 28–45 (TKRH…RTRR). Positions 1 to 49 (MPKLKTKSSAKKRFKVTASGRVMSAQSTKRHGMTKRSKRSLRTRRGIAQ) are disordered.

This sequence belongs to the bacterial ribosomal protein bL35 family.

The chain is Large ribosomal subunit protein bL35 from Anaplasma marginale (strain Florida).